The sequence spans 317 residues: Fe-S cluster assembly protein DRE2 (317 aa).

An N-terminal SAM-like domain region spans residues 1-131; the sequence is MERMLFLSPP…KPNFGAQDTV (131 aa). Positions 132-209 are linker; sequence PLKLGKKKKA…EEALMDEEDM (78 aa). [2Fe-2S] cluster is bound by residues Cys-219, Cys-230, Cys-233, and Cys-235. The fe-S binding site A stretch occupies residues 219–235; sequence CRPKAGKRRRACKDCTC. [4Fe-4S] cluster-binding residues include Cys-280, Cys-283, Cys-291, and Cys-294. 2 short sequence motifs (cx2C motif) span residues 280–283 and 291–294; these read CGNC and CDGC. Residues 280 to 294 form a fe-S binding site B region; it reads CGNCALGDAFRCDGC.

The protein belongs to the anamorsin family. In terms of assembly, monomer. Interacts with TAH18. Interacts with MIA40. The cofactor is [2Fe-2S] cluster. [4Fe-4S] cluster is required as a cofactor.

Its subcellular location is the cytoplasm. It is found in the mitochondrion intermembrane space. Its function is as follows. Component of the cytosolic iron-sulfur (Fe-S) protein assembly (CIA) machinery required for the maturation of extramitochondrial Fe-S proteins. Part of an electron transfer chain functioning in an early step of cytosolic Fe-S biogenesis, facilitating the de novo assembly of a [4Fe-4S] cluster on the scaffold complex CFD1-NBP35. Electrons are transferred to DRE2 from NADPH via the FAD- and FMN-containing protein TAH18. TAH18-DRE2 are also required for the assembly of the diferric tyrosyl radical cofactor of ribonucleotide reductase (RNR), probably by providing electrons for reduction during radical cofactor maturation in the catalytic small subunit RNR2. The protein is Fe-S cluster assembly protein DRE2 of Uncinocarpus reesii (strain UAMH 1704).